The primary structure comprises 456 residues: Bifunctional protein GlmU (456 aa).

The pyrophosphorylase stretch occupies residues 1–229 (MLNNAMSVVI…LSEVEGVNNR (229 aa)). Residues 11–14 (LAAG), Lys25, Gln76, 81–82 (GT), 103–105 (YGD), Gly140, Glu154, Asn169, and Asn227 each bind UDP-N-acetyl-alpha-D-glucosamine. Mg(2+) is bound at residue Asp105. Asn227 serves as a coordination point for Mg(2+). A linker region spans residues 230-250 (LQLSRLERVYQSEQAEKLLLA). The tract at residues 251–456 (GVMLRDPARF…EGWRRPVKKK (206 aa)) is N-acetyltransferase. UDP-N-acetyl-alpha-D-glucosamine-binding residues include Arg333 and Lys351. The Proton acceptor role is filled by His363. Positions 366 and 377 each coordinate UDP-N-acetyl-alpha-D-glucosamine. Acetyl-CoA is bound by residues Ala380, 386–387 (NY), Ser405, Ala423, and Arg440.

It in the N-terminal section; belongs to the N-acetylglucosamine-1-phosphate uridyltransferase family. In the C-terminal section; belongs to the transferase hexapeptide repeat family. Homotrimer. Requires Mg(2+) as cofactor.

It is found in the cytoplasm. It catalyses the reaction alpha-D-glucosamine 1-phosphate + acetyl-CoA = N-acetyl-alpha-D-glucosamine 1-phosphate + CoA + H(+). The enzyme catalyses N-acetyl-alpha-D-glucosamine 1-phosphate + UTP + H(+) = UDP-N-acetyl-alpha-D-glucosamine + diphosphate. It participates in nucleotide-sugar biosynthesis; UDP-N-acetyl-alpha-D-glucosamine biosynthesis; N-acetyl-alpha-D-glucosamine 1-phosphate from alpha-D-glucosamine 6-phosphate (route II): step 2/2. The protein operates within nucleotide-sugar biosynthesis; UDP-N-acetyl-alpha-D-glucosamine biosynthesis; UDP-N-acetyl-alpha-D-glucosamine from N-acetyl-alpha-D-glucosamine 1-phosphate: step 1/1. Its pathway is bacterial outer membrane biogenesis; LPS lipid A biosynthesis. Catalyzes the last two sequential reactions in the de novo biosynthetic pathway for UDP-N-acetylglucosamine (UDP-GlcNAc). The C-terminal domain catalyzes the transfer of acetyl group from acetyl coenzyme A to glucosamine-1-phosphate (GlcN-1-P) to produce N-acetylglucosamine-1-phosphate (GlcNAc-1-P), which is converted into UDP-GlcNAc by the transfer of uridine 5-monophosphate (from uridine 5-triphosphate), a reaction catalyzed by the N-terminal domain. The sequence is that of Bifunctional protein GlmU from Escherichia coli (strain 55989 / EAEC).